Reading from the N-terminus, the 346-residue chain is Holliday junction branch migration complex subunit RuvB (346 aa).

Residues 1-182 (MSEPARLISP…FGIPVRLTFY (182 aa)) form a large ATPase domain (RuvB-L) region. Residues leucine 21, arginine 22, glycine 63, lysine 66, threonine 67, threonine 68, 129 to 131 (EDY), arginine 172, tyrosine 182, and arginine 219 each bind ATP. Threonine 67 contributes to the Mg(2+) binding site. Positions 183-253 (TVEELELIVR…IADEALTRLL (71 aa)) are small ATPAse domain (RuvB-S). The segment at 256–346 (NVGFDQLDKR…AQFRLFQEDD (91 aa)) is head domain (RuvB-H). 3 residues coordinate DNA: arginine 292, arginine 311, and arginine 316.

Belongs to the RuvB family. As to quaternary structure, homohexamer. Forms an RuvA(8)-RuvB(12)-Holliday junction (HJ) complex. HJ DNA is sandwiched between 2 RuvA tetramers; dsDNA enters through RuvA and exits via RuvB. An RuvB hexamer assembles on each DNA strand where it exits the tetramer. Each RuvB hexamer is contacted by two RuvA subunits (via domain III) on 2 adjacent RuvB subunits; this complex drives branch migration. In the full resolvosome a probable DNA-RuvA(4)-RuvB(12)-RuvC(2) complex forms which resolves the HJ.

It localises to the cytoplasm. It carries out the reaction ATP + H2O = ADP + phosphate + H(+). The RuvA-RuvB-RuvC complex processes Holliday junction (HJ) DNA during genetic recombination and DNA repair, while the RuvA-RuvB complex plays an important role in the rescue of blocked DNA replication forks via replication fork reversal (RFR). RuvA specifically binds to HJ cruciform DNA, conferring on it an open structure. The RuvB hexamer acts as an ATP-dependent pump, pulling dsDNA into and through the RuvAB complex. RuvB forms 2 homohexamers on either side of HJ DNA bound by 1 or 2 RuvA tetramers; 4 subunits per hexamer contact DNA at a time. Coordinated motions by a converter formed by DNA-disengaged RuvB subunits stimulates ATP hydrolysis and nucleotide exchange. Immobilization of the converter enables RuvB to convert the ATP-contained energy into a lever motion, pulling 2 nucleotides of DNA out of the RuvA tetramer per ATP hydrolyzed, thus driving DNA branch migration. The RuvB motors rotate together with the DNA substrate, which together with the progressing nucleotide cycle form the mechanistic basis for DNA recombination by continuous HJ branch migration. Branch migration allows RuvC to scan DNA until it finds its consensus sequence, where it cleaves and resolves cruciform DNA. This chain is Holliday junction branch migration complex subunit RuvB, found in Rhizobium etli (strain ATCC 51251 / DSM 11541 / JCM 21823 / NBRC 15573 / CFN 42).